The following is a 621-amino-acid chain: Chaperone protein HtpG (621 aa).

An a; substrate-binding region spans residues 1–341 (MSNQEYTFQT…SEDLPLNVSR (341 aa)). The interval 342–547 (EILQQNKILA…GDEQNAMMAN (206 aa)) is b. A c region spans residues 548–621 (FMRQMGQSVP…RLNSVLLKAL (74 aa)).

Belongs to the heat shock protein 90 family. In terms of assembly, homodimer.

It localises to the cytoplasm. Functionally, molecular chaperone. Has ATPase activity. The protein is Chaperone protein HtpG of Helicobacter pylori (strain HPAG1).